The primary structure comprises 1244 residues: MSDKKWTAEQLAAITTRDTNLLVAAAAGAGKTAVLVERIIGLITDPHRPVDVDQLLIVTFTNAAAAEMRERIGQALSKALQENPHSKRLARQLTMLNRASITTLHSFCLDLLRRYFYQLDLDPGFRVADEVEAELLRLDVLEELFERRYNQDNVEVFARLVDSYGGQRDDSRLQDLVLELYRFSGSHPLPVQWLTSLAENYVIPEGKTLDDQTWIVQIKKTIFQEVEGVLGLLKQAQWLAKQPGGPEPYSKTLTEDIINIKPLTNNDWDASWEKLYRSITAIKWSKLSPCRGEIDDQLKNKAQNLRNKAKEKFNDIINTYFSAEPTVILEDLRSLQPLIADLAKLTIEFMELYQKKKQAKGLVDFGDLEHYCLTILLDKENDAAEFRPSAVAIELQQQYAEVLVDEYQDINAVQETILRLVSKKNNRFMVGDVKQSIYRFRLAEPKLFLSKSELYANTDNCQGTRIGLSKNFRSRLEVVNAVNFIFRQIMTKKAGEITYDELEELHCGADYPQAEDVKTATGPVEVYLIDRKDAQLEEQNTDSAEEKLTDGEEQEDLDSDQAEARLIGRRIQAMVKGTDKAMGPEFKVWDKEIGKYRPVSYRDIVILLRATTGRANTFLEELRTMGVPTYAEVGTGYFEAVEVETFLSLLKIIDNPRQDVPLAGVLRSPVVGLKASDLAEIRLCSKEGDFYDAVRIAAAADLGDVAVTLTKFLRQLENWRSRARRDTLADLIWLLYRETGYYDYVGGMVGGTQRQANLRVLYHRAKQFEATSFRGLFRFLRFVERLKDSGSDLGAARSLSENEDVVRIMSIHKSKGLEFPVLFVAGLGKRFNMMDLNKDMLMHKELGLGPQIIHLGSRVSYPSLPKLLIKQQIRKESVAEEMRVLYVALTRAREKLILVGAVRDLEKSLEKWCTSTYQAGWTLPDAELMAAKCYLDWLCPAIARHHNGHELRSLAKTEGQPFSEVATDPSAWQLVFQALKDIKNQTQENKEQSQGLLVKIKDMEPFEDAGLIKEVERRLSWQYPRAEVTTRPAKAAVTEVKHKFDELARQEAGVMSYRPKISGRPRFLQQDKGLTPAERGSAIHLVMQHIPLDKLPDEEGVQVLLQNLIQKEILLPQQAAAINPNHITGFFASSIGQRVLQAPKVERELPFSLALPATEVYQELPECGDEMVLVQGVIDCLVDEGDGFLLIDYKSDAVYPGQDSPVDRYRGQINLYARAVQDILGKPVKDRVIYLFNNGQIVHI.

Residues 4 to 475 (KKWTAEQLAA…IGLSKNFRSR (472 aa)) form the UvrD-like helicase ATP-binding domain. 25–32 (AAAGAGKT) lines the ATP pocket. One can recognise a UvrD-like helicase C-terminal domain in the interval 515 to 816 (EDVKTATGPV…RIMSIHKSKG (302 aa)). The disordered stretch occupies residues 538–559 (EQNTDSAEEKLTDGEEQEDLDS).

Belongs to the helicase family. AddA subfamily. In terms of assembly, heterodimer of AddA and AddB/RexB. Mg(2+) is required as a cofactor.

The catalysed reaction is Couples ATP hydrolysis with the unwinding of duplex DNA by translocating in the 3'-5' direction.. The enzyme catalyses ATP + H2O = ADP + phosphate + H(+). In terms of biological role, the heterodimer acts as both an ATP-dependent DNA helicase and an ATP-dependent, dual-direction single-stranded exonuclease. Recognizes the chi site generating a DNA molecule suitable for the initiation of homologous recombination. The AddA nuclease domain is required for chi fragment generation; this subunit has the helicase and 3' -&gt; 5' nuclease activities. The protein is ATP-dependent helicase/nuclease subunit A of Desulforamulus reducens (strain ATCC BAA-1160 / DSM 100696 / MI-1) (Desulfotomaculum reducens).